The primary structure comprises 417 residues: MTSITANQKPSKLVPPHGSPELKPLLLNGDALNQALKLASTLPTITLSSRERGDLIMFGIGGFTPLNGFMNQADWQGVVDNMRLQSGDNAGLFWPIPITLSAPKATADSLNAGDKVALVAQDGEIMGILTVEETYTIDKEHECQQVFTTTDPEHPGVQQVLEQSEVNIAGSVEVLSEGEFPTLYPEIYKTPAETREILDNKGWQTVAAFQTRNPMHRSHEYLAKIAIEICDGVLIHSLLGALKPGDIPADVRQEAIKSLIDNYFRQDTVIQAGYPLDMRYAGPREALLHALFRQNYGCSHLIVGRDHAGVGDYYGAFDAQTIFDHVGKDDLITQPLKIGWTFWCNACNAMASDKTCPHDASEHVKVSGTKLRKALSEDEDVPDNFSRPEVLQILRDYYAGIAFDERAEVKLVGASAV.

Positions 1–10 (MTSITANQKP) are enriched in polar residues. Residues 1–20 (MTSITANQKPSKLVPPHGSP) are disordered.

This sequence belongs to the sulfate adenylyltransferase family.

The enzyme catalyses sulfate + ATP + H(+) = adenosine 5'-phosphosulfate + diphosphate. It functions in the pathway sulfur metabolism; hydrogen sulfide biosynthesis; sulfite from sulfate: step 1/3. The protein is Sulfate adenylyltransferase of Psychrobacter arcticus (strain DSM 17307 / VKM B-2377 / 273-4).